A 481-amino-acid chain; its full sequence is Deoxyribodipyrimidine photo-lyase (481 aa).

One can recognise a Photolyase/cryptochrome alpha/beta domain in the interval 1–136; the sequence is MQLFWHRRDL…AHAQFHDAVH (136 aa). Y228 serves as a coordination point for FAD. Residue R232 participates in DNA binding. 240-244 contacts FAD; that stretch reads TSRLS. Interaction with DNA stretches follow at residues 283-290 and 349-350; these read QLAWREFY and NR. 380–382 provides a ligand contact to FAD; sequence DHD. Position 412 (Q412) interacts with DNA.

Belongs to the DNA photolyase class-1 family. As to quaternary structure, monomer. The cofactor is FAD. Coenzyme F420-(gamma-Glu)n is required as a cofactor.

It catalyses the reaction cyclobutadipyrimidine (in DNA) = 2 pyrimidine residues (in DNA).. In terms of biological role, involved in repair of UV radiation-induced DNA damage. Catalyzes the light-dependent monomerization (300-600 nm) of cyclobutyl pyrimidine dimers (in cis-syn configuration), which are formed between adjacent bases on the same DNA strand upon exposure to ultraviolet radiation. This chain is Deoxyribodipyrimidine photo-lyase (phr), found in Halobacterium salinarum (strain ATCC 700922 / JCM 11081 / NRC-1) (Halobacterium halobium).